A 523-amino-acid chain; its full sequence is Calcium-dependent protein kinase 28 (523 aa).

A lipid anchor (N-myristoyl glycine) is attached at G2. C4 carries S-palmitoyl cysteine lipidation. Residues 15-43 (SSRRSSQTKSKAAPTPIDTKASTKRRTGS) are disordered. In terms of domain architecture, Protein kinase spans 62–322 (YTIGKLLGHG…AAQALSHAWV (261 aa)). ATP-binding positions include 68-76 (LGHGQFGYT) and K91. The active-site Proton acceptor is D188. Residues S228 and S318 each carry the phosphoserine modification. Residues 328–358 (ATDIPVDISVLNNLRQFVRYSRLKQFALRAL) are autoinhibitory domain. 4 EF-hand domains span residues 365-400 (AEIS…DLPW), 402-437 (LKDS…VHQL), 444-479 (KWQL…RGSI), and 482-509 (LLDE…ASIS). Ca(2+)-binding residues include D378, D380, N382, E389, D415, N417, D419, E426, D457, D459, D461, Y463, E468, D487, D489, D491, and K493. S495 is subject to Phosphoserine. Residue E498 coordinates Ca(2+). S515 is modified (phosphoserine).

It belongs to the protein kinase superfamily. Ser/Thr protein kinase family. CDPK subfamily. As to quaternary structure, interacts with BIK1. As to expression, expressed in vascular and meristematic tissues throughout plant development.

Its subcellular location is the cell membrane. The catalysed reaction is L-seryl-[protein] + ATP = O-phospho-L-seryl-[protein] + ADP + H(+). It carries out the reaction L-threonyl-[protein] + ATP = O-phospho-L-threonyl-[protein] + ADP + H(+). Activated by calcium. Autophosphorylation plays an important role in the regulation of the kinase activity. May play a role in signal transduction pathways that involve calcium as a second messenger. Acts as a developmentally controlled regulator for coordinated stem elongation and vascular development. Acts as a key component which contributes to the developmental switch that establishes the transition from vegetative to reproductive growth. Involved in pathogen-associated molecular pattern (PAMP)-triggered immunity (PTI) signaling. Interacts with and phosphorylates the kinase BIK1, a central rate-limiting kinase in PTI signaling. Facilitates BIK1 turnover and negatively regulates BIK1-mediated immune responses triggered by several PAMPs. Its kinase activity is necessary and sufficient for its function in PTI signaling. The protein is Calcium-dependent protein kinase 28 of Arabidopsis thaliana (Mouse-ear cress).